Reading from the N-terminus, the 369-residue chain is Phenylalanine--tRNA ligase alpha subunit (369 aa).

Glutamate 269 is a binding site for Mg(2+).

This sequence belongs to the class-II aminoacyl-tRNA synthetase family. Phe-tRNA synthetase alpha subunit type 1 subfamily. In terms of assembly, tetramer of two alpha and two beta subunits. The cofactor is Mg(2+).

The protein resides in the cytoplasm. The catalysed reaction is tRNA(Phe) + L-phenylalanine + ATP = L-phenylalanyl-tRNA(Phe) + AMP + diphosphate + H(+). The chain is Phenylalanine--tRNA ligase alpha subunit from Brucella canis (strain ATCC 23365 / NCTC 10854 / RM-666).